The primary structure comprises 124 residues: Acidic phospholipase A2 A (124 aa).

Disulfide bonds link cysteine 26/cysteine 116, cysteine 28/cysteine 44, cysteine 43/cysteine 95, cysteine 49/cysteine 124, cysteine 50/cysteine 88, cysteine 57/cysteine 81, and cysteine 75/cysteine 86. Ca(2+)-binding residues include tyrosine 27, glycine 29, and glycine 31. Residue histidine 47 is part of the active site. Position 48 (aspartate 48) interacts with Ca(2+). Residue aspartate 89 is part of the active site.

It belongs to the phospholipase A2 family. Group II subfamily. D49 sub-subfamily. Ca(2+) serves as cofactor. As to expression, expressed by the venom gland.

It localises to the secreted. It catalyses the reaction a 1,2-diacyl-sn-glycero-3-phosphocholine + H2O = a 1-acyl-sn-glycero-3-phosphocholine + a fatty acid + H(+). In terms of biological role, PLA2 catalyzes the calcium-dependent hydrolysis of the 2-acyl groups in 3-sn-phosphoglycerides. In Gloydius halys (Chinese water mocassin), this protein is Acidic phospholipase A2 A.